We begin with the raw amino-acid sequence, 335 residues long: Phenylalanine--tRNA ligase alpha subunit (335 aa).

E262 lines the Mg(2+) pocket.

This sequence belongs to the class-II aminoacyl-tRNA synthetase family. Phe-tRNA synthetase alpha subunit type 1 subfamily. In terms of assembly, tetramer of two alpha and two beta subunits. The cofactor is Mg(2+).

The protein localises to the cytoplasm. The enzyme catalyses tRNA(Phe) + L-phenylalanine + ATP = L-phenylalanyl-tRNA(Phe) + AMP + diphosphate + H(+). The polypeptide is Phenylalanine--tRNA ligase alpha subunit (Prochlorococcus marinus (strain MIT 9313)).